Here is a 155-residue protein sequence, read N- to C-terminus: Small ribosomal subunit protein uS7cz/uS7cy (155 aa).

It belongs to the universal ribosomal protein uS7 family. Part of the 30S ribosomal subunit.

It localises to the plastid. The protein localises to the chloroplast. Functionally, one of the primary rRNA binding proteins, it binds directly to 16S rRNA where it nucleates assembly of the head domain of the 30S subunit. In Populus trichocarpa (Western balsam poplar), this protein is Small ribosomal subunit protein uS7cz/uS7cy (rps7-A).